We begin with the raw amino-acid sequence, 206 residues long: Nucleoside triphosphate pyrophosphatase (206 aa).

Asp76 serves as the catalytic Proton acceptor.

Belongs to the Maf family. A divalent metal cation is required as a cofactor.

It is found in the cytoplasm. It catalyses the reaction a ribonucleoside 5'-triphosphate + H2O = a ribonucleoside 5'-phosphate + diphosphate + H(+). The catalysed reaction is a 2'-deoxyribonucleoside 5'-triphosphate + H2O = a 2'-deoxyribonucleoside 5'-phosphate + diphosphate + H(+). In terms of biological role, nucleoside triphosphate pyrophosphatase. May have a dual role in cell division arrest and in preventing the incorporation of modified nucleotides into cellular nucleic acids. The protein is Nucleoside triphosphate pyrophosphatase of Streptomyces avermitilis (strain ATCC 31267 / DSM 46492 / JCM 5070 / NBRC 14893 / NCIMB 12804 / NRRL 8165 / MA-4680).